A 918-amino-acid polypeptide reads, in one-letter code: Exostosin-like 3 (918 aa).

At 1–30 (MTGYTMLRNGGVGNGGQTCMLRWSNRIRLT) the chain is on the cytoplasmic side. The required for interaction with REG3A stretch occupies residues 1–140 (MTGYTMLRNG…LKNVISQTEH (140 aa)). The chain crosses the membrane as a helical; Signal-anchor for type II membrane protein span at residues 31–51 (WLSFTLFIILVFFPLIAHYYL). The Lumenal segment spans residues 52 to 918 (TTLDEADEAG…HDKTKCFKFI (867 aa)). 2 cysteine pairs are disulfide-bonded: C177–C182 and C188–C236. Residue N290 is glycosylated (N-linked (GlcNAc...) asparagine). S361 is modified (phosphoserine). A disulfide bridge links C399 with C414. A glycan (N-linked (GlcNAc...) asparagine) is linked at N591. L667, R671, N696, N722, R727, D743, D744, and D745 together coordinate UDP-N-acetyl-alpha-D-glucosamine. Residue D745 participates in Mn(2+) binding. N789 is a glycosylation site (N-linked (GlcNAc...) asparagine). An intrachain disulfide couples C830 to C878. Residues E831, D832, and R875 each coordinate UDP-N-acetyl-alpha-D-glucosamine. D832 is a catalytic residue.

This sequence belongs to the glycosyltransferase 47 family. As to quaternary structure, homodimer; disulfide-linked. Interacts with REG3A. The cofactor is Mn(2+). Expressed in pancreatic islet beta-cells. Expressed in lung epithelial cells. Expressed in microglia.

It localises to the endoplasmic reticulum membrane. It is found in the golgi apparatus. The protein localises to the cell membrane. The protein resides in the nucleus. The enzyme catalyses 3-O-(beta-D-GlcA-(1-&gt;3)-beta-D-Gal-(1-&gt;3)-beta-D-Gal-(1-&gt;4)-beta-D-Xyl)-L-seryl-[protein] + UDP-N-acetyl-alpha-D-glucosamine = 3-O-(alpha-D-GlcNAc-(1-&gt;4)-beta-D-GlcA-(1-&gt;3)-beta-D-Gal-(1-&gt;3)-beta-D-Gal-(1-&gt;4)-beta-D-Xyl)-L-seryl-[protein] + UDP + H(+). The protein operates within glycan metabolism; heparan sulfate biosynthesis. Functionally, glycosyltransferase which regulates the biosynthesis of heparan sulfate (HS). Initiates HS synthesis by transferring the first N-acetyl-alpha-D-glucosamine (alpha-GlcNAc) residue (GlcNAcT-I activity) to the tetrasaccharide linker (GlcA-Gal-Gal-Xyl-)Ser core linker. May also transfer alpha-GlcNAc residues during HS elongation (GlcNAcT-II activity). Lacks glucuronyl transferase II (GlcAT-II) activity. Important for both skeletal development and hematopoiesis, through the formation of HS proteoglycans (HSPGs). Through the synthesis of HS, regulates postnatal pancreatic islet maturation and insulin secretion. In terms of biological role, receptor for REG3A, REG3B and REG3G, induces the activation of downstream signaling pathways such as PI3K-AKT or RAS-RAF-MEK-ERK signaling pathway. Required for the function of REG3A in regulating keratinocyte proliferation and differentiation. Required for the inhibition of skin inflammation mediated by REG3A through the activation of PI3K-AKT-STAT3 pathway. Required for the function of REG3A and REG3G in glucose tolerance in pancreas. Expressed in microglia, is activated by nociceptor-derived REG3G in response to endotoxins, leading to the inhibition of kynurenine pathway to prevent endotoxic death. This Mus musculus (Mouse) protein is Exostosin-like 3.